A 61-amino-acid polypeptide reads, in one-letter code: Photosystem II reaction center protein K (61 aa).

The propeptide occupies 1 to 24; it reads MLNIFSLICICLHSTLYSSSFFLA. The helical transmembrane segment at 36-56 threads the bilayer; the sequence is IVDFMPVIPLLFFLLAFVWQA.

This sequence belongs to the PsbK family. PSII is composed of 1 copy each of membrane proteins PsbA, PsbB, PsbC, PsbD, PsbE, PsbF, PsbH, PsbI, PsbJ, PsbK, PsbL, PsbM, PsbT, PsbX, PsbY, PsbZ, Psb30/Ycf12, at least 3 peripheral proteins of the oxygen-evolving complex and a large number of cofactors. It forms dimeric complexes.

The protein localises to the plastid. It localises to the chloroplast thylakoid membrane. One of the components of the core complex of photosystem II (PSII). PSII is a light-driven water:plastoquinone oxidoreductase that uses light energy to abstract electrons from H(2)O, generating O(2) and a proton gradient subsequently used for ATP formation. It consists of a core antenna complex that captures photons, and an electron transfer chain that converts photonic excitation into a charge separation. This Eucalyptus globulus subsp. globulus (Tasmanian blue gum) protein is Photosystem II reaction center protein K.